The following is a 233-amino-acid chain: Adenylyl cyclase-associated protein 1 (233 aa).

A Phosphotyrosine modification is found at Y14. Phosphoserine is present on S17. Disordered regions lie at residues V43 to L71 and D91 to T129. A compositionally biased stretch (low complexity) spans L53 to S64. N6-methyllysine is present on K101. 4 positions are modified to phosphoserine: S104, S115, S122, and S124. K151 is covalently cross-linked (Glycyl lysine isopeptide (Lys-Gly) (interchain with G-Cter in SUMO1)). One can recognise a C-CAP/cofactor C-like domain in the interval V173–V221.

The protein belongs to the CAP family. As to quaternary structure, homodimer. Binds actin monomers.

The protein resides in the cell membrane. Functionally, directly regulates filament dynamics and has been implicated in a number of complex developmental and morphological processes, including mRNA localization and the establishment of cell polarity. In Sus scrofa (Pig), this protein is Adenylyl cyclase-associated protein 1 (CAP1).